Consider the following 274-residue polypeptide: NH(3)-dependent NAD(+) synthetase (274 aa).

An ATP-binding site is contributed by 46-53 (GISGGQDS). Residue D52 participates in Mg(2+) binding. R140 provides a ligand contact to deamido-NAD(+). T160 contacts ATP. E165 lines the Mg(2+) pocket. K173 and D180 together coordinate deamido-NAD(+). Positions 189 and 211 each coordinate ATP. Deamido-NAD(+) is bound at residue 260–261 (HK).

This sequence belongs to the NAD synthetase family. As to quaternary structure, homodimer.

It carries out the reaction deamido-NAD(+) + NH4(+) + ATP = AMP + diphosphate + NAD(+) + H(+). It participates in cofactor biosynthesis; NAD(+) biosynthesis; NAD(+) from deamido-NAD(+) (ammonia route): step 1/1. Catalyzes the ATP-dependent amidation of deamido-NAD to form NAD. Uses ammonia as a nitrogen source. The protein is NH(3)-dependent NAD(+) synthetase of Listeria monocytogenes serovar 1/2a (strain ATCC BAA-679 / EGD-e).